We begin with the raw amino-acid sequence, 228 residues long: Urease accessory protein UreE (228 aa).

The interval histidine 193–histidine 228 is disordered. Residues serine 204–histidine 228 are compositionally biased toward basic and acidic residues.

It belongs to the UreE family.

The protein resides in the cytoplasm. Its function is as follows. Involved in urease metallocenter assembly. Binds nickel. Probably functions as a nickel donor during metallocenter assembly. This is Urease accessory protein UreE from Yersinia rohdei.